The sequence spans 84 residues: Small ribosomal subunit protein uS17 (84 aa).

The protein belongs to the universal ribosomal protein uS17 family. In terms of assembly, part of the 30S ribosomal subunit.

In terms of biological role, one of the primary rRNA binding proteins, it binds specifically to the 5'-end of 16S ribosomal RNA. The protein is Small ribosomal subunit protein uS17 of Citrobacter koseri (strain ATCC BAA-895 / CDC 4225-83 / SGSC4696).